Here is a 369-residue protein sequence, read N- to C-terminus: IST1-like protein (369 aa).

Positions 12-59 (KLKVQLKLAVSRIQILKNKKANIVRDEKRNVAELLRKKNEESARIRVE) form a coiled coil. A disordered region spans residues 224 to 354 (QIIQQQQQPQ…SSDTGYPDYD (131 aa)). Composition is skewed to low complexity over residues 225 to 239 (IIQQQQQPQMPSFPI) and 246 to 270 (PTFSQIQHQQQIQQQYQQQQQSPQF). Residues 277–305 (FYNNNSGNQTPQFPTISTNNSDGYSNDKF) show a composition bias toward polar residues. Positions 306-337 (NNGNNNYNNNNNNNNNNNNNNNHNNNNNNNNN) are enriched in low complexity.

The protein belongs to the IST1 family.

The polypeptide is IST1-like protein (Dictyostelium discoideum (Social amoeba)).